Reading from the N-terminus, the 270-residue chain is Putative phosphoenolpyruvate synthase regulatory protein (270 aa).

Residue 150-157 (GVSRCGKT) participates in ADP binding.

Belongs to the pyruvate, phosphate/water dikinase regulatory protein family. PSRP subfamily.

The catalysed reaction is [pyruvate, water dikinase] + ADP = [pyruvate, water dikinase]-phosphate + AMP + H(+). It carries out the reaction [pyruvate, water dikinase]-phosphate + phosphate + H(+) = [pyruvate, water dikinase] + diphosphate. Functionally, bifunctional serine/threonine kinase and phosphorylase involved in the regulation of the phosphoenolpyruvate synthase (PEPS) by catalyzing its phosphorylation/dephosphorylation. The chain is Putative phosphoenolpyruvate synthase regulatory protein from Shewanella halifaxensis (strain HAW-EB4).